The following is a 433-amino-acid chain: uncharacterized protein (433 aa).

The region spanning 1 to 59 (MGEEYEVEIGPVAHGGHCIARTSEGQVLFVRHALPGERVLARVTEGEEGARYLRADAVE) is the TRAM domain. Cys-72, Cys-80, Cys-83, and Cys-168 together coordinate [4Fe-4S] cluster. 4 residues coordinate S-adenosyl-L-methionine: Gln-262, Tyr-291, Glu-315, and Asp-359. Catalysis depends on Cys-386, which acts as the Nucleophile.

It belongs to the class I-like SAM-binding methyltransferase superfamily. RNA M5U methyltransferase family.

This is an uncharacterized protein from Streptomyces avermitilis (strain ATCC 31267 / DSM 46492 / JCM 5070 / NBRC 14893 / NCIMB 12804 / NRRL 8165 / MA-4680).